We begin with the raw amino-acid sequence, 236 residues long: Lectin CPL (236 aa).

E8 and D10 together coordinate Mn(2+). The Ca(2+) site is built by D10, Y12, N14, and D19. N14 provides a ligand contact to a carbohydrate. Mn(2+) is bound by residues D19 and H24. Residues 99–100 (VY), D207, and R227 each bind a carbohydrate.

It belongs to the leguminous lectin family. Homotetramer; dimer of dimers. Post-translationally, concanavalin A-like lectins of the Diocleinae subtribe undergo proteolytic processing referred to as circular permutation. The propeptide is split into an N-terminal and a C-terminal part, the gamma and beta chain, respectively. These are then religated in beta-gamma order to form the mature alpha chain. The beta and gamma chains can often be detected in cell extracts. Residues 1-118 of the mature chain, as displayed here, probably constitute the beta chain in the propeptide, residues 119-236 the gamma chain.

Its function is as follows. D-mannose/D-glucose-binding lectin that also binds derivative alpha-methyl-D-mannppyranoside. Has hemagglutinating activity towards rabbit erythrocytes. The sequence is that of Lectin CPL from Bionia pedicellata (Camptosema pedicellatum).